Reading from the N-terminus, the 443-residue chain is Ribosomal protein uS12 methylthiotransferase RimO (443 aa).

Residues 5 to 116 (PTIAINHLGC…IVDIIRRTEQ (112 aa)) enclose the MTTase N-terminal domain. [4Fe-4S] cluster is bound by residues cysteine 14, cysteine 50, cysteine 79, cysteine 154, cysteine 158, and cysteine 161. The region spanning 140–369 (TTNEAIAYLR…MALQQPISAQ (230 aa)) is the Radical SAM core domain. The 67-residue stretch at 372 to 438 (AACLGQTLDV…DYDLYGMTAE (67 aa)) folds into the TRAM domain.

The protein belongs to the methylthiotransferase family. RimO subfamily. The cofactor is [4Fe-4S] cluster.

The protein localises to the cytoplasm. It catalyses the reaction L-aspartate(89)-[ribosomal protein uS12]-hydrogen + (sulfur carrier)-SH + AH2 + 2 S-adenosyl-L-methionine = 3-methylsulfanyl-L-aspartate(89)-[ribosomal protein uS12]-hydrogen + (sulfur carrier)-H + 5'-deoxyadenosine + L-methionine + A + S-adenosyl-L-homocysteine + 2 H(+). Catalyzes the methylthiolation of an aspartic acid residue of ribosomal protein uS12. This is Ribosomal protein uS12 methylthiotransferase RimO from Synechocystis sp. (strain ATCC 27184 / PCC 6803 / Kazusa).